The sequence spans 274 residues: Elongation factor Ts (274 aa).

The involved in Mg(2+) ion dislocation from EF-Tu stretch occupies residues 79 to 82; sequence TDFV.

This sequence belongs to the EF-Ts family.

The protein localises to the cytoplasm. In terms of biological role, associates with the EF-Tu.GDP complex and induces the exchange of GDP to GTP. It remains bound to the aminoacyl-tRNA.EF-Tu.GTP complex up to the GTP hydrolysis stage on the ribosome. The sequence is that of Elongation factor Ts from Azobacteroides pseudotrichonymphae genomovar. CFP2.